We begin with the raw amino-acid sequence, 212 residues long: Adenylate kinase (212 aa).

10 to 15 (GAGKGT) serves as a coordination point for ATP. The segment at 30–59 (STGDMFRAAMANQTEMGTLAKSFIDKGELV) is NMP. Residues threonine 31, arginine 36, 57–59 (ELV), 86–89 (GYPR), and glutamine 93 contribute to the AMP site. The tract at residues 127-159 (GRIINRKTGETYHKVFNPPADYNEDDYYQREDD) is LID. ATP-binding positions include arginine 128 and 137 to 138 (TY). The AMP site is built by arginine 156 and arginine 167. Glutamine 195 contributes to the ATP binding site.

The protein belongs to the adenylate kinase family. Monomer.

It localises to the cytoplasm. The enzyme catalyses AMP + ATP = 2 ADP. It functions in the pathway purine metabolism; AMP biosynthesis via salvage pathway; AMP from ADP: step 1/1. Functionally, catalyzes the reversible transfer of the terminal phosphate group between ATP and AMP. Plays an important role in cellular energy homeostasis and in adenine nucleotide metabolism. This chain is Adenylate kinase, found in Streptococcus mutans serotype c (strain ATCC 700610 / UA159).